The following is a 1127-amino-acid chain: Testis-expressed protein 2 (1127 aa).

Disordered stretches follow at residues 1–27 (MTSL…HVQR) and 133–279 (AVSP…SFFK). Low complexity predominate over residues 133-187 (AVSPGSSSSGPLASSPSVSSLSEQKTSSSSPLSSPSKSPILSSSASTSTLSSAKP). Phosphoserine is present on serine 196. Residues 249–275 (QFTQPRNTGGDSKTAPSSPLTSPSDTR) are compositionally biased toward polar residues. A Phosphothreonine modification is found at threonine 262. Phosphoserine is present on residues serine 265, serine 266, serine 270, and serine 295. Asparagine 330 carries N-linked (GlcNAc...) asparagine glycosylation. A disordered region spans residues 348-386 (EEECDSEGDGYGSDSNIPRSDHPKSTGEPTREIELKSSQ). Basic and acidic residues predominate over residues 366–382 (RSDHPKSTGEPTREIEL). Helical transmembrane passes span 475-495 (TLGF…PHYV) and 497-517 (GLFL…WFFT). Disordered regions lie at residues 648 to 685 (KAQT…QRDQ), 715 to 764 (KKSS…QKEL), 786 to 816 (QESR…PPSE), and 947 to 980 (DEES…GYVG). Over residues 650-670 (QTDKETSEEKPPAEGSEDPKK) the composition is skewed to basic and acidic residues. Residues serine 732, serine 738, serine 744, serine 748, serine 751, serine 798, and serine 815 each carry the phosphoserine modification. A compositionally biased stretch (polar residues) spans 735 to 750 (NSPSGHLTHSRSSSKG). A compositionally biased stretch (polar residues) spans 787 to 804 (ESRSPQRSPLQSAESSPT). The SMP-LTD domain occupies 816–1101 (EEEEQEAWVN…MPNMDDVYIT (286 aa)). Positions 947–962 (DEESSSAGSSEEDDAP) are enriched in acidic residues.

The protein localises to the endoplasmic reticulum membrane. The protein resides in the nucleus membrane. Functionally, during endoplasmic reticulum (ER) stress or when cellular ceramide levels increase, may induce contacts between the ER and medial-Golgi complex to facilitate non-vesicular transport of ceramides from the ER to the Golgi complex where they are converted to complex sphingolipids, preventing toxic ceramide accumulation. The polypeptide is Testis-expressed protein 2 (TEX2) (Homo sapiens (Human)).